Reading from the N-terminus, the 224-residue chain is Thiamine-phosphate synthase (224 aa).

Residues 44-48 (QFREK) and N79 contribute to the 4-amino-2-methyl-5-(diphosphooxymethyl)pyrimidine site. Residues D80 and D99 each contribute to the Mg(2+) site. A 4-amino-2-methyl-5-(diphosphooxymethyl)pyrimidine-binding site is contributed by S117. 143–145 (TST) is a binding site for 2-[(2R,5Z)-2-carboxy-4-methylthiazol-5(2H)-ylidene]ethyl phosphate. A 4-amino-2-methyl-5-(diphosphooxymethyl)pyrimidine-binding site is contributed by K146. Residues G175 and 195–196 (IS) contribute to the 2-[(2R,5Z)-2-carboxy-4-methylthiazol-5(2H)-ylidene]ethyl phosphate site.

This sequence belongs to the thiamine-phosphate synthase family. Mg(2+) is required as a cofactor.

The enzyme catalyses 2-[(2R,5Z)-2-carboxy-4-methylthiazol-5(2H)-ylidene]ethyl phosphate + 4-amino-2-methyl-5-(diphosphooxymethyl)pyrimidine + 2 H(+) = thiamine phosphate + CO2 + diphosphate. It carries out the reaction 2-(2-carboxy-4-methylthiazol-5-yl)ethyl phosphate + 4-amino-2-methyl-5-(diphosphooxymethyl)pyrimidine + 2 H(+) = thiamine phosphate + CO2 + diphosphate. The catalysed reaction is 4-methyl-5-(2-phosphooxyethyl)-thiazole + 4-amino-2-methyl-5-(diphosphooxymethyl)pyrimidine + H(+) = thiamine phosphate + diphosphate. The protein operates within cofactor biosynthesis; thiamine diphosphate biosynthesis; thiamine phosphate from 4-amino-2-methyl-5-diphosphomethylpyrimidine and 4-methyl-5-(2-phosphoethyl)-thiazole: step 1/1. In terms of biological role, condenses 4-methyl-5-(beta-hydroxyethyl)thiazole monophosphate (THZ-P) and 2-methyl-4-amino-5-hydroxymethyl pyrimidine pyrophosphate (HMP-PP) to form thiamine monophosphate (TMP). In Bacillus cereus (strain ATCC 10987 / NRS 248), this protein is Thiamine-phosphate synthase.